Reading from the N-terminus, the 354-residue chain is Sulfate/thiosulfate import ATP-binding protein CysA (354 aa).

The ABC transporter domain maps to 3–237 (IEVRGLSKRF…PATPFVYGFL (235 aa)). 35–42 (GPSGCGKT) contributes to the ATP binding site.

This sequence belongs to the ABC transporter superfamily. Sulfate/tungstate importer (TC 3.A.1.6) family. The complex is composed of two ATP-binding proteins (CysA), two transmembrane proteins (CysT and CysW) and a solute-binding protein (CysP).

The protein resides in the cell inner membrane. It catalyses the reaction sulfate(out) + ATP + H2O = sulfate(in) + ADP + phosphate + H(+). The catalysed reaction is thiosulfate(out) + ATP + H2O = thiosulfate(in) + ADP + phosphate + H(+). Part of the ABC transporter complex CysAWTP involved in sulfate/thiosulfate import. Responsible for energy coupling to the transport system. This is Sulfate/thiosulfate import ATP-binding protein CysA from Bordetella parapertussis (strain 12822 / ATCC BAA-587 / NCTC 13253).